The sequence spans 224 residues: Large ribosomal subunit protein uL16z (224 aa).

The protein belongs to the universal ribosomal protein uL16 family. As to quaternary structure, component of the small ribosomal subunit. Mature ribosomes consist of a small (40S) and a large (60S) subunit. The 40S subunit contains about 33 different proteins and 1 molecule of RNA (18S). The 60S subunit contains about 49 different proteins and 3 molecules of RNA (25S, 5.8S and 5S).

The sequence is that of Large ribosomal subunit protein uL16z (SC34) from Oryza sativa subsp. indica (Rice).